Reading from the N-terminus, the 646-residue chain is Cartilage acidic protein 1 (646 aa).

The signal sequence occupies residues Met1 to Gly28. Residues Asp47–Ala89 form an FG-GAP 1; atypical repeat. Residues Tyr106–Asp148 form an FG-GAP 2; atypical repeat. Residues Ala284–Asp334 form an FG-GAP 3; atypical repeat. One copy of the FG-GAP 4; atypical repeat lies at Gly396–Gly438. In terms of domain architecture, EGF-like spans Asp560 to Cys606. 3 disulfide bridges follow: Cys564/Cys578, Cys571/Cys587, and Cys593/Cys606.

Its subcellular location is the secreted. The protein localises to the extracellular space. It localises to the extracellular matrix. In Mus musculus (Mouse), this protein is Cartilage acidic protein 1 (Crtac1).